The sequence spans 859 residues: DNA (cytosine-5)-methyltransferase 3B (859 aa).

The segment at 1 to 305 (MKGDSRHLNE…LATFNKLVSY (305 aa)) is interaction with DNMT1 and DNMT3A. The interval 25–226 (GNFSDQSSDT…RDGDSTEYQD (202 aa)) is disordered. A compositionally biased stretch (acidic residues) spans 85–94 (DRDDEVDDGN). Ser-96 is modified (phosphoserine). A Glycyl lysine isopeptide (Lys-Gly) (interchain with G-Cter in SUMO2) cross-link involves residue Lys-102. Over residues 103–114 (LTRETKDTRTRS) the composition is skewed to basic and acidic residues. Thr-112 is modified (phosphothreonine). Ser-116 bears the Phosphoserine mark. Residues 167-179 (SSSASTPWSSPAS) show a composition bias toward low complexity. Residues 189–198 (KSVSTPSVDL) are compositionally biased toward polar residues. Over residues 214–226 (AESRDGDSTEYQD) the composition is skewed to basic and acidic residues. Ser-216 carries the post-translational modification Phosphoserine. A PWWP domain is found at 232 to 290 (IGDLVWGKIKGFSWWPAMVVSWKATSKRQAMPGMRWVQWFGDGKFSEISADKLVALGLF). A disordered region spans residues 348 to 429 (KPTGIEGLKP…ESRERMASEV (82 aa)). Basic and acidic residues-rich tracts occupy residues 370–381 (RRSDSRNLEPRR) and 412–426 (GKDR…ERMA). Arg-415 is subject to Citrulline. The ADD domain occupies 428–560 (EVTNNKGNLE…LQDFFTTDPD (133 aa)). The GATA-type; atypical zinc-finger motif lies at 439-469 (RCLSCGKKNPVSFHPLFEGGLCQSCRDRFLE). An interaction with the PRC2/EED-EZH2 complex region spans residues 440–532 (CLSCGKKNPV…LQEPWSCYMC (93 aa)). The PHD-type; atypical zinc finger occupies 480–536 (QSYCTVCCEGRELLLCSNTSCCRCFCVECLEVLVGAGTAEDAKLQEPWSCYMCLPQR). An SAM-dependent MTase C5-type domain is found at 581 to 859 (IRVLSLFDGI…APLKDYFACE (279 aa)). S-adenosyl-L-methionine-binding positions include 588–592 (DGIAT) and Glu-611. Residue Lys-623 forms a Glycyl lysine isopeptide (Lys-Gly) (interchain with G-Cter in SUMO2) linkage. 633–635 (DVR) contributes to the S-adenosyl-L-methionine binding site. The active site involves Cys-657. Residue 838–840 (RSW) participates in S-adenosyl-L-methionine binding.

Belongs to the class I-like SAM-binding methyltransferase superfamily. C5-methyltransferase family. Interacts with CBX4, DNMT1, DNMT3A, SETDB1, UBE2I9, UBL1 and ZHX1. Interacts with SUV39H1 and BAZ2A/TIP5. Interacts with the PRC2/EED-EZH2 complex. Interacts with UHRF1. Sumoylated. In terms of processing, citrullinated by PADI4.

It localises to the nucleus. It catalyses the reaction a 2'-deoxycytidine in DNA + S-adenosyl-L-methionine = a 5-methyl-2'-deoxycytidine in DNA + S-adenosyl-L-homocysteine + H(+). With respect to regulation, activated by binding to the regulatory factor DNMT3L. Its function is as follows. Required for genome-wide de novo methylation and is essential for the establishment of DNA methylation patterns during development. DNA methylation is coordinated with methylation of histones. May preferentially methylates nucleosomal DNA within the nucleosome core region. May function as transcriptional co-repressor by associating with CBX4 and independently of DNA methylation. Seems to be involved in gene silencing. In association with DNMT1 and via the recruitment of CTCFL/BORIS, involved in activation of BAG1 gene expression by modulating dimethylation of promoter histone H3 at H3K4 and H3K9. Functions as a transcriptional corepressor by associating with ZHX1. Required for DUX4 silencing in somatic cells. The polypeptide is DNA (cytosine-5)-methyltransferase 3B (Dnmt3b) (Mus musculus (Mouse)).